A 621-amino-acid polypeptide reads, in one-letter code: MTDNAPITFDGKRFAAHLSTAPGVYRMYAADDTLLYVGKAGALRKRVASYFNGTPKNTRLTAMLAQVVRMDVTITRNEAEALLLENQLIKSLTPRYNVLLRDDKSYPYVLLTREAWPRIALHRGPQIVPGRYFGPYPGVTAVRDMLNLIHKLFKLRSCEDSVFRNRSRPCLQYQIGRCSAPCVNVVTHDNYTEAVHRVTLFLEGKSDLLAEELIQAMQVASEHLEFEQAARLRDLLTSLRSMQNRQYVDGRAADLDVLACAALSGHACVLLLSFRDGRNLGTRMFFPKTNGEERTAEILSAFVSQYYAEYPPPPEILLDQEIPDHTLLEAAFSRSSAHKISLRWNVRGERAGYVELAVRNAQVALSTELTSQRAQRVRSEAVRQLLGLEGPIKRVECFDISHTMGEATVASCVVFDAVGPVRSQYRRYNITGITPGDDYAAMRQAIERRFRRAVEEDKQGERPDVLFIDGGAGQLAQAKMALNAVGVESVLLVGVSKGEERRAGHETLIMLDGQELHPGAASPALQFIQQVRDEAHRFAITGHRARRQKTRMTSKLEDIPGIGSRRRANLLKHFGGLAGVKAAGQTEIARVEGISTALAAKIYASLHGLSKNDAANASRVS.

The region spanning 20–98 (TAPGVYRMYA…IKSLTPRYNV (79 aa)) is the GIY-YIG domain. Residues 207–242 (DLLAEELIQAMQVASEHLEFEQAARLRDLLTSLRSM) form the UVR domain.

It belongs to the UvrC family. As to quaternary structure, interacts with UvrB in an incision complex.

The protein resides in the cytoplasm. In terms of biological role, the UvrABC repair system catalyzes the recognition and processing of DNA lesions. UvrC both incises the 5' and 3' sides of the lesion. The N-terminal half is responsible for the 3' incision and the C-terminal half is responsible for the 5' incision. This is UvrABC system protein C from Xylella fastidiosa (strain M23).